A 138-amino-acid polypeptide reads, in one-letter code: ATP synthase epsilon chain (138 aa).

Belongs to the ATPase epsilon chain family. In terms of assembly, F-type ATPases have 2 components, CF(1) - the catalytic core - and CF(0) - the membrane proton channel. CF(1) has five subunits: alpha(3), beta(3), gamma(1), delta(1), epsilon(1). CF(0) has three main subunits: a, b and c.

The protein resides in the cell inner membrane. Functionally, produces ATP from ADP in the presence of a proton gradient across the membrane. The chain is ATP synthase epsilon chain from Acidovorax ebreus (strain TPSY) (Diaphorobacter sp. (strain TPSY)).